A 448-amino-acid chain; its full sequence is Integrator complex subunit 15 (448 aa).

It belongs to the Integrator subunit 15 family. As to quaternary structure, component of the Integrator complex, composed of core subunits INTS1, INTS2, INTS3, INTS4, INTS5, INTS6, INTS7, INTS8, INTS9/RC74, INTS10, INTS11/CPSF3L, INTS12, INTS13, INTS14 and INTS15. The core complex associates with protein phosphatase 2A subunits PPP2CA and PPP2R1A, to form the Integrator-PP2A (INTAC) complex. INTS15 is part of the tail subcomplex, composed of INTS10, INTS13, INTS14 and INTS15.

The protein resides in the nucleus. Its subcellular location is the chromosome. Functionally, component of the integrator complex, a multiprotein complex that terminates RNA polymerase II (Pol II) transcription in the promoter-proximal region of genes. The integrator complex provides a quality checkpoint during transcription elongation by driving premature transcription termination of transcripts that are unfavorably configured for transcriptional elongation: the complex terminates transcription by (1) catalyzing dephosphorylation of the C-terminal domain (CTD) of Pol II subunit POLR2A/RPB1 and SUPT5H/SPT5, (2) degrading the exiting nascent RNA transcript via endonuclease activity and (3) promoting the release of Pol II from bound DNA. The integrator complex is also involved in terminating the synthesis of non-coding Pol II transcripts, such as enhancer RNAs (eRNAs), small nuclear RNAs (snRNAs), telomerase RNAs and long non-coding RNAs (lncRNAs). INTS15 is part of the integrator tail module that acts as a platform for the recruitment of transcription factors at promoters. Within the integrator complex, INTS15 is required to bridge different integrator modules. The sequence is that of Integrator complex subunit 15 from Mus musculus (Mouse).